The chain runs to 309 residues: HPr kinase/phosphorylase (309 aa).

Residues His138 and Lys159 contribute to the active site. ATP is bound at residue 153 to 160 (GQSGVGKS). Ser160 contributes to the Mg(2+) binding site. Asp177 (proton acceptor; for phosphorylation activity. Proton donor; for dephosphorylation activity) is an active-site residue. The interval 201–210 (LEIRGLGIIN) is important for the catalytic mechanism of both phosphorylation and dephosphorylation. Glu202 lines the Mg(2+) pocket. Arg243 is an active-site residue. The interval 264–269 (PVRPGR) is important for the catalytic mechanism of dephosphorylation.

Belongs to the HPrK/P family. Homohexamer. Mg(2+) is required as a cofactor.

The catalysed reaction is [HPr protein]-L-serine + ATP = [HPr protein]-O-phospho-L-serine + ADP + H(+). The enzyme catalyses [HPr protein]-O-phospho-L-serine + phosphate + H(+) = [HPr protein]-L-serine + diphosphate. In terms of biological role, catalyzes the ATP- as well as the pyrophosphate-dependent phosphorylation of a specific serine residue in HPr, a phosphocarrier protein of the phosphoenolpyruvate-dependent sugar phosphotransferase system (PTS). HprK/P also catalyzes the pyrophosphate-producing, inorganic phosphate-dependent dephosphorylation (phosphorolysis) of seryl-phosphorylated HPr (P-Ser-HPr). The two antagonistic activities of HprK/P are regulated by several intracellular metabolites, which change their concentration in response to the absence or presence of rapidly metabolisable carbon sources (glucose, fructose, etc.) in the growth medium. Also phosphorylates/dephosphorylates the HPr-like catabolite repression protein crh on a specific serine residue. Therefore, by controlling the phosphorylation state of HPr and crh, HPrK/P is a sensor enzyme that plays a major role in the regulation of carbon metabolism and sugar transport: it mediates carbon catabolite repression (CCR), and regulates PTS-catalyzed carbohydrate uptake and inducer exclusion. In Bacillus mycoides (strain KBAB4) (Bacillus weihenstephanensis), this protein is HPr kinase/phosphorylase.